An 86-amino-acid polypeptide reads, in one-letter code: MALLITSKCTNCDMCLPECPNEAISIGDEIYVIDPILCTECVGHYDTPTCQKVCPITNCIKPDPEHQETEEQLWERFVMIHHSDKL.

4Fe-4S ferredoxin-type domains are found at residues 1–29 and 31–65; these read MALLITSKCTNCDMCLPECPNEAISIGDE and YVIDPILCTECVGHYDTPTCQKVCPITNCIKPDPE. [4Fe-4S] cluster is bound by residues Cys-9, Cys-12, Cys-15, Cys-19, Cys-38, Cys-41, Cys-50, and Cys-54.

[4Fe-4S] cluster serves as cofactor.

This is an uncharacterized protein from Haemophilus influenzae (strain ATCC 51907 / DSM 11121 / KW20 / Rd).